An 804-amino-acid chain; its full sequence is DNA gyrase subunit B (804 aa).

Residues 431-546 (CEMYIVEGDS…NGCVYIAQPP (116 aa)) enclose the Toprim domain. Positions 437, 511, and 513 each coordinate Mg(2+).

The protein belongs to the type II topoisomerase GyrB family. Heterotetramer, composed of two GyrA and two GyrB chains. In the heterotetramer, GyrA contains the active site tyrosine that forms a transient covalent intermediate with DNA, while GyrB binds cofactors and catalyzes ATP hydrolysis. It depends on Mg(2+) as a cofactor. The cofactor is Mn(2+). Requires Ca(2+) as cofactor.

The protein localises to the cytoplasm. It carries out the reaction ATP-dependent breakage, passage and rejoining of double-stranded DNA.. Its function is as follows. A type II topoisomerase that negatively supercoils closed circular double-stranded (ds) DNA in an ATP-dependent manner to modulate DNA topology and maintain chromosomes in an underwound state. Negative supercoiling favors strand separation, and DNA replication, transcription, recombination and repair, all of which involve strand separation. Also able to catalyze the interconversion of other topological isomers of dsDNA rings, including catenanes and knotted rings. Type II topoisomerases break and join 2 DNA strands simultaneously in an ATP-dependent manner. This chain is DNA gyrase subunit B, found in Chlamydia muridarum (strain MoPn / Nigg).